Here is a 637-residue protein sequence, read N- to C-terminus: Biosynthetic arginine decarboxylase (637 aa).

Residue lysine 101 is modified to N6-(pyridoxal phosphate)lysine. 286–296 (FDVGGGLAVDY) provides a ligand contact to substrate.

The protein belongs to the Orn/Lys/Arg decarboxylase class-II family. SpeA subfamily. Mg(2+) serves as cofactor. The cofactor is pyridoxal 5'-phosphate.

It carries out the reaction L-arginine + H(+) = agmatine + CO2. It functions in the pathway amine and polyamine biosynthesis; agmatine biosynthesis; agmatine from L-arginine: step 1/1. Catalyzes the biosynthesis of agmatine from arginine. The sequence is that of Biosynthetic arginine decarboxylase from Shewanella sediminis (strain HAW-EB3).